A 312-amino-acid chain; its full sequence is Pyrimidine-specific ribonucleoside hydrolase RihA (312 aa).

His-240 is an active-site residue.

Belongs to the IUNH family. RihA subfamily.

Hydrolyzes cytidine or uridine to ribose and cytosine or uracil, respectively. In Shewanella woodyi (strain ATCC 51908 / MS32), this protein is Pyrimidine-specific ribonucleoside hydrolase RihA.